Reading from the N-terminus, the 592-residue chain is UPF0329 protein ECU01_0110/ECU01_1500/ECU08_0040 (592 aa).

Basic and acidic residues-rich tracts occupy residues 306 to 339 (RQRR…SKEK) and 353 to 362 (EAKEEEKKES). The interval 306-404 (RQRRREREIE…RKRYKIHRRV (99 aa)) is disordered.

Belongs to the UPF0329 family.

The polypeptide is UPF0329 protein ECU01_0110/ECU01_1500/ECU08_0040 (Encephalitozoon cuniculi (strain GB-M1) (Microsporidian parasite)).